The chain runs to 85 residues: Large ribosomal subunit protein bL27 (85 aa).

This sequence belongs to the bacterial ribosomal protein bL27 family.

In Azobacteroides pseudotrichonymphae genomovar. CFP2, this protein is Large ribosomal subunit protein bL27.